The primary structure comprises 103 residues: MTGRGKGGKGLGKGGAKRHRKVLRDNIQGITKPAIRRLARRGGVKRISGLIYEETRGVLKVFLENVIRDAVTYTEHAKRKTVTAMDVVYALKRQGRTLYGFGG.

Residues 1 to 14 (MTGRGKGGKGLGKG) show a composition bias toward gly residues. The segment at 1-20 (MTGRGKGGKGLGKGGAKRHR) is disordered. Residues Lys6 and Lys13 each carry the N6-acetyl-N6-methyllysine; alternate modification. Residues 17-21 (KRHRK) mediate DNA binding.

This sequence belongs to the histone H4 family. As to quaternary structure, the nucleosome is a histone octamer containing two molecules each of H2A, H2B, H3 and H4 assembled in one H3-H4 heterotetramer and two H2A-H2B heterodimers. The octamer wraps approximately 147 bp of DNA.

It localises to the nucleus. The protein localises to the chromosome. Its function is as follows. Core component of nucleosome. Nucleosomes wrap and compact DNA into chromatin, limiting DNA accessibility to the cellular machineries which require DNA as a template. Histones thereby play a central role in transcription regulation, DNA repair, DNA replication and chromosomal stability. DNA accessibility is regulated via a complex set of post-translational modifications of histones, also called histone code, and nucleosome remodeling. The chain is Histone H4 (His4) from Myrmica ruginodis (Red ant).